We begin with the raw amino-acid sequence, 341 residues long: Ribosomal RNA small subunit methyltransferase H (341 aa).

Residues 47–49, aspartate 64, phenylalanine 91, aspartate 109, and glutamine 116 each bind S-adenosyl-L-methionine; that span reads GGY.

The protein belongs to the methyltransferase superfamily. RsmH family.

The protein localises to the cytoplasm. The enzyme catalyses cytidine(1402) in 16S rRNA + S-adenosyl-L-methionine = N(4)-methylcytidine(1402) in 16S rRNA + S-adenosyl-L-homocysteine + H(+). In terms of biological role, specifically methylates the N4 position of cytidine in position 1402 (C1402) of 16S rRNA. The protein is Ribosomal RNA small subunit methyltransferase H of Sinorhizobium medicae (strain WSM419) (Ensifer medicae).